Here is a 142-residue protein sequence, read N- to C-terminus: MKTFVAKPETVKRDWYIVDAEGKTLGRIATEIASRLRGKHKAEYTPHVDTGDYIIVVNAEKVHVTGKKFTDKIYHSHSGFPGGIKSISFDKLIKRKPEMVIEAAVKGMLPKGPLGRAMFRKLKVYAGAEHAHAAQQPQVLDI.

Belongs to the universal ribosomal protein uL13 family. In terms of assembly, part of the 50S ribosomal subunit.

Its function is as follows. This protein is one of the early assembly proteins of the 50S ribosomal subunit, although it is not seen to bind rRNA by itself. It is important during the early stages of 50S assembly. The polypeptide is Large ribosomal subunit protein uL13 (Aeromonas salmonicida (strain A449)).